The chain runs to 185 residues: Large ribosomal subunit protein uL5m (185 aa).

The protein belongs to the universal ribosomal protein uL5 family.

Its subcellular location is the mitochondrion. The polypeptide is Large ribosomal subunit protein uL5m (RPL5) (Brassica napus (Rape)).